Reading from the N-terminus, the 615-residue chain is Chaperone protein DnaK (615 aa).

At Thr-174 the chain carries Phosphothreonine; by autocatalysis. The interval 581 to 615 is disordered; the sequence is QAAPKDGAEGDAKSADDNTVDGDFEEVDPNKDDKK. Basic and acidic residues predominate over residues 586–596; sequence DGAEGDAKSAD. Over residues 598-607 the composition is skewed to acidic residues; sequence NTVDGDFEEV.

Belongs to the heat shock protein 70 family.

In terms of biological role, acts as a chaperone. This is Chaperone protein DnaK from Leuconostoc mesenteroides subsp. mesenteroides (strain ATCC 8293 / DSM 20343 / BCRC 11652 / CCM 1803 / JCM 6124 / NCDO 523 / NBRC 100496 / NCIMB 8023 / NCTC 12954 / NRRL B-1118 / 37Y).